A 203-amino-acid chain; its full sequence is Small ribosomal subunit protein uS4 (203 aa).

The S4 RNA-binding domain occupies 93–173; sequence RRLDNVVFRS…FPSWIQVDKA (81 aa).

It belongs to the universal ribosomal protein uS4 family. As to quaternary structure, part of the 30S ribosomal subunit. Contacts protein S5. The interaction surface between S4 and S5 is involved in control of translational fidelity.

One of the primary rRNA binding proteins, it binds directly to 16S rRNA where it nucleates assembly of the body of the 30S subunit. In terms of biological role, with S5 and S12 plays an important role in translational accuracy. The protein is Small ribosomal subunit protein uS4 of Chlorobium limicola (strain DSM 245 / NBRC 103803 / 6330).